Consider the following 388-residue polypeptide: Succinate--CoA ligase [ADP-forming] subunit beta (388 aa).

Positions 9–244 (KQLFARYGLP…PSQEDSREAH (236 aa)) constitute an ATP-grasp domain. ATP contacts are provided by residues Lys46, 53-55 (GRG), Glu99, Thr102, and Glu107. Mg(2+) is bound by residues Asn199 and Asp213. Residues Asn264 and 321-323 (GIV) each bind substrate.

This sequence belongs to the succinate/malate CoA ligase beta subunit family. In terms of assembly, heterotetramer of two alpha and two beta subunits. Mg(2+) is required as a cofactor.

It carries out the reaction succinate + ATP + CoA = succinyl-CoA + ADP + phosphate. The catalysed reaction is GTP + succinate + CoA = succinyl-CoA + GDP + phosphate. Its pathway is carbohydrate metabolism; tricarboxylic acid cycle; succinate from succinyl-CoA (ligase route): step 1/1. Succinyl-CoA synthetase functions in the citric acid cycle (TCA), coupling the hydrolysis of succinyl-CoA to the synthesis of either ATP or GTP and thus represents the only step of substrate-level phosphorylation in the TCA. The beta subunit provides nucleotide specificity of the enzyme and binds the substrate succinate, while the binding sites for coenzyme A and phosphate are found in the alpha subunit. The protein is Succinate--CoA ligase [ADP-forming] subunit beta of Erwinia tasmaniensis (strain DSM 17950 / CFBP 7177 / CIP 109463 / NCPPB 4357 / Et1/99).